The chain runs to 540 residues: O-phosphoserine--tRNA(Cys) ligase (540 aa).

Substrate is bound by residues 188–190 (HMT), 233–235 (SAS), 275–276 (YY), and Asn319.

It belongs to the class-II aminoacyl-tRNA synthetase family. O-phosphoseryl-tRNA(Cys) synthetase subfamily. As to quaternary structure, homotetramer. Interacts with SepCysS.

It carries out the reaction tRNA(Cys) + O-phospho-L-serine + ATP = O-phospho-L-seryl-tRNA(Cys) + AMP + diphosphate. Its function is as follows. Catalyzes the attachment of O-phosphoserine (Sep) to tRNA(Cys). In Methanococcus aeolicus (strain ATCC BAA-1280 / DSM 17508 / OCM 812 / Nankai-3), this protein is O-phosphoserine--tRNA(Cys) ligase.